The sequence spans 130 residues: Glycine cleavage system H protein (130 aa).

The 83-residue stretch at 24–106 (TVTIGITDHA…YDDGWFFKVK (83 aa)) folds into the Lipoyl-binding domain. N6-lipoyllysine is present on K65.

Belongs to the GcvH family. As to quaternary structure, the glycine cleavage system is composed of four proteins: P, T, L and H. (R)-lipoate is required as a cofactor.

The glycine cleavage system catalyzes the degradation of glycine. The H protein shuttles the methylamine group of glycine from the P protein to the T protein. In Saccharophagus degradans (strain 2-40 / ATCC 43961 / DSM 17024), this protein is Glycine cleavage system H protein.